The primary structure comprises 312 residues: MKVAVLGAAGGIGQALALLLKTQLPAGSDLSLYDIAPVTPGVAVDLSHIPTDVTIAGFAGMDPTDALVGADVVLISAGVARKPGMDRSDLFNINAGIIKNLAGKCAEVCPNACIGIITNPVNTTVPIAAEVLKQAGVYDKRKLFGITTLDVIRSETFVSALKGISLADVEVPVIGGHSGVTILPLLSQVKGVEFTAEEVVALTARIQNAGTEVVEAKAGGGSATLSMGQAAARFGLSLVRALQGEKGIVECTYVDGGSEHATFFAQPVLLGKNGVEEVLAYGELSEFETNARDAMLEELKANITLGEEFVAG.

Residues 7–13 (GAAGGIG) and D34 contribute to the NAD(+) site. Positions 81 and 87 each coordinate substrate. NAD(+) is bound by residues N94 and 117–119 (ITN). Substrate contacts are provided by N119 and R153. H177 (proton acceptor) is an active-site residue. NAD(+) is bound at residue M227.

It belongs to the LDH/MDH superfamily. MDH type 1 family. As to quaternary structure, homodimer.

It carries out the reaction (S)-malate + NAD(+) = oxaloacetate + NADH + H(+). Functionally, catalyzes the reversible oxidation of malate to oxaloacetate. The sequence is that of Malate dehydrogenase (mdh) from Moritella sp. (strain 5710).